A 421-amino-acid chain; its full sequence is D-inositol 3-phosphate glycosyltransferase (421 aa).

H13 is a 1D-myo-inositol 3-phosphate binding site. UDP-N-acetyl-alpha-D-glucosamine contacts are provided by residues 19–20 and G27; that span reads QP. Residues 24-29, K82, Y115, T139, and R159 each bind 1D-myo-inositol 3-phosphate; that span reads DAGGMN. UDP-N-acetyl-alpha-D-glucosamine is bound by residues R233, K238, and V294. Residues F303, R304, and A306 each coordinate Mg(2+). Residues E316 and E324 each coordinate UDP-N-acetyl-alpha-D-glucosamine. T330 contacts Mg(2+).

The protein belongs to the glycosyltransferase group 1 family. MshA subfamily. Homodimer.

The enzyme catalyses 1D-myo-inositol 3-phosphate + UDP-N-acetyl-alpha-D-glucosamine = 1D-myo-inositol 2-acetamido-2-deoxy-alpha-D-glucopyranoside 3-phosphate + UDP + H(+). Functionally, catalyzes the transfer of a N-acetyl-glucosamine moiety to 1D-myo-inositol 3-phosphate to produce 1D-myo-inositol 2-acetamido-2-deoxy-glucopyranoside 3-phosphate in the mycothiol biosynthesis pathway. The sequence is that of D-inositol 3-phosphate glycosyltransferase from Arthrobacter sp. (strain FB24).